A 359-amino-acid chain; its full sequence is Phosphoserine aminotransferase (359 aa).

Position 41 (Arg-41) interacts with L-glutamate. Pyridoxal 5'-phosphate contacts are provided by residues 75–76 (AS), Trp-101, Thr-151, Asp-171, and Gln-194. N6-(pyridoxal phosphate)lysine is present on Lys-195. Pyridoxal 5'-phosphate is bound at residue 236 to 237 (NT).

The protein belongs to the class-V pyridoxal-phosphate-dependent aminotransferase family. SerC subfamily. As to quaternary structure, homodimer. Pyridoxal 5'-phosphate is required as a cofactor.

The protein resides in the cytoplasm. It catalyses the reaction O-phospho-L-serine + 2-oxoglutarate = 3-phosphooxypyruvate + L-glutamate. The enzyme catalyses 4-(phosphooxy)-L-threonine + 2-oxoglutarate = (R)-3-hydroxy-2-oxo-4-phosphooxybutanoate + L-glutamate. The protein operates within amino-acid biosynthesis; L-serine biosynthesis; L-serine from 3-phospho-D-glycerate: step 2/3. It functions in the pathway cofactor biosynthesis; pyridoxine 5'-phosphate biosynthesis; pyridoxine 5'-phosphate from D-erythrose 4-phosphate: step 3/5. In terms of biological role, catalyzes the reversible conversion of 3-phosphohydroxypyruvate to phosphoserine and of 3-hydroxy-2-oxo-4-phosphonooxybutanoate to phosphohydroxythreonine. The chain is Phosphoserine aminotransferase from Thiobacillus denitrificans (strain ATCC 25259 / T1).